The chain runs to 339 residues: Senescence-specific cysteine protease SAG39 (339 aa).

Positions 1–23 are cleaved as a signal peptide; it reads MAMAKALLFAILGCLCLCSAVLA. Cystine bridges form between Cys144–Cys187, Cys178–Cys220, and Cys276–Cys328. Residue Cys147 is part of the active site. Active-site residues include His282 and Asn303.

It belongs to the peptidase C1 family.

It is found in the vacuole. Functionally, cysteine protease that may have a developmental senescence specific cell death function during apoptosis, heavy metal detoxification, and hypersensitive response. The polypeptide is Senescence-specific cysteine protease SAG39 (Oryza sativa subsp. indica (Rice)).